The sequence spans 182 residues: Ribulose bisphosphate carboxylase small subunit, chloroplastic 6 (182 aa).

A chloroplast-targeting transit peptide spans 1-41; it reads MAATMMSKTIISSKQCSKPIAPPKVSINKGFVNTSAAIKNR.

Belongs to the RuBisCO small chain family. As to quaternary structure, heterohexadecamer of 8 large and 8 small subunits.

The protein localises to the plastid. It is found in the chloroplast. Functionally, ruBisCO catalyzes two reactions: the carboxylation of D-ribulose 1,5-bisphosphate, the primary event in carbon dioxide fixation, as well as the oxidative fragmentation of the pentose substrate. Both reactions occur simultaneously and in competition at the same active site. Although the small subunit is not catalytic it is essential for maximal activity. The sequence is that of Ribulose bisphosphate carboxylase small subunit, chloroplastic 6 from Acetabularia peniculus (Green alga).